The sequence spans 265 residues: Small ribosomal subunit protein eS4 (265 aa).

The region spanning 42 to 104 (LPLILIIRNR…TGENYRLLYD (63 aa)) is the S4 RNA-binding domain.

The protein belongs to the eukaryotic ribosomal protein eS4 family.

Its subcellular location is the cytoplasm. In Oryza sativa subsp. japonica (Rice), this protein is Small ribosomal subunit protein eS4 (RPS4).